Reading from the N-terminus, the 416-residue chain is Gamma-glutamyl phosphate reductase (416 aa).

Belongs to the gamma-glutamyl phosphate reductase family.

Its subcellular location is the cytoplasm. It catalyses the reaction L-glutamate 5-semialdehyde + phosphate + NADP(+) = L-glutamyl 5-phosphate + NADPH + H(+). Its pathway is amino-acid biosynthesis; L-proline biosynthesis; L-glutamate 5-semialdehyde from L-glutamate: step 2/2. In terms of biological role, catalyzes the NADPH-dependent reduction of L-glutamate 5-phosphate into L-glutamate 5-semialdehyde and phosphate. The product spontaneously undergoes cyclization to form 1-pyrroline-5-carboxylate. This chain is Gamma-glutamyl phosphate reductase, found in Streptococcus uberis (strain ATCC BAA-854 / 0140J).